Here is a 248-residue protein sequence, read N- to C-terminus: Serine/arginine-rich splicing factor 1 (248 aa).

At Ser-2 the chain carries N-acetylserine. A Phosphoserine modification is found at Ser-2. The RRM 1 domain occupies Cys-16–Ser-91. A Glycyl lysine isopeptide (Lys-Gly) (interchain with G-Cter in SUMO2) cross-link involves residue Lys-30. Lys-38 carries the post-translational modification N6-acetyllysine; alternate. Lys-38 participates in a covalent cross-link: Glycyl lysine isopeptide (Lys-Gly) (interchain with G-Cter in SUMO2); alternate. The interval Phe-88–Trp-134 is disordered. 3 positions are modified to asymmetric dimethylarginine; alternate: Arg-93, Arg-97, and Arg-109. Omega-N-methylarginine; alternate occurs at positions 93, 97, and 109. Gly residues predominate over residues Arg-93–Pro-108. Position 111 is an omega-N-methylarginine (Arg-111). Residues Asn-121–Asp-195 enclose the RRM 2 domain. Residue Ser-133 is modified to Phosphoserine. An N6-acetyllysine modification is found at Lys-179. Residues Arg-191 to Thr-248 are disordered. Residues Arg-198–Arg-247 are interaction with SAFB1. Residues Ser-199 and Ser-201 each carry the phosphoserine modification. Tyr-202 is modified (phosphotyrosine). A phosphoserine mark is found at Ser-205, Ser-207, Ser-209, Ser-231, Ser-234, and Ser-238. A compositionally biased stretch (basic residues) spans Ser-205 to Thr-248.

This sequence belongs to the splicing factor SR family. In terms of assembly, consists of two polypeptides of p32 and p33. Identified in the spliceosome C complex. Component of a ribonucleoprotein complex containing mRNAs and RNA-binding proteins including DDX5, HNRNPH2 and SRSF1 as well as splicing regulator ARVCF. In vitro, self-associates and binds SRSF2, SNRNP70 and U2AF1 but not U2AF2. Binds SREK1/SFRS12. Interacts with SAFB/SAFB1. Interacts with PSIP1/LEDGF. Interacts with RSRC1 (via Arg/Ser-rich domain). Interacts with ZRSR2/U2AF1-RS2. Interacts with CCDC55 (via C-terminus). Interacts with SRPK1 and a sliding docking interaction is essential for its sequential and processive phosphorylation by SRPK1. Interacts with NXF1. Interacts with CCNL1, CCNL2 and CDK11B. Interacts with RRP1B. Interacts (when phosphorylated in its RS domain) with TNPO3; promoting nuclear import. Interacts with ILDR1 (via C-terminus) and ILDR2. In terms of processing, phosphorylated by CLK1, CLK2, CLK3 and CLK4. Phosphorylated by SRPK1 at multiple serines in its RS domain via a directional (C-terminal to N-terminal) and a dual-track mechanism incorporating both processive phosphorylation (in which the kinase stays attached to the substrate after each round of phosphorylation) and distributive phosphorylation steps (in which the kinase and substrate dissociate after each phosphorylation event). The RS domain of SRSF1 binds to a docking groove in the large lobe of the kinase domain of SRPK1 and this induces certain structural changes in SRPK1 and/or RRM 2 domain of SRSF1, allowing RRM 2 to bind the kinase and initiate phosphorylation. The cycles continue for several phosphorylation steps in a processive manner (steps 1-8) until the last few phosphorylation steps (approximately steps 9-12). During that time, a mechanical stress induces the unfolding of the beta-4 motif in RRM 2, which then docks at the docking groove of SRPK1. This also signals RRM 2 to begin to dissociate, which facilitates SRSF1 dissociation after phosphorylation is completed. Post-translationally, asymmetrically dimethylated at arginines, probably by PRMT1, methylation promotes localization to nuclear speckles.

It localises to the cytoplasm. The protein resides in the nucleus speckle. Functionally, plays a role in preventing exon skipping, ensuring the accuracy of splicing and regulating alternative splicing. Interacts with other spliceosomal components, via the RS domains, to form a bridge between the 5'- and 3'-splice site binding components, U1 snRNP and U2AF. Can stimulate binding of U1 snRNP to a 5'-splice site-containing pre-mRNA. Binds to purine-rich RNA sequences, either the octamer, 5'-RGAAGAAC-3' (r=A or G) or the decamers, AGGACAGAGC/AGGACGAAGC. Binds preferentially to the 5'-CGAGGCG-3' motif in vitro. Three copies of the octamer constitute a powerful splicing enhancer in vitro, the ASF/SF2 splicing enhancer (ASE) which can specifically activate ASE-dependent splicing. May function as export adapter involved in mRNA nuclear export through the TAP/NXF1 pathway. This is Serine/arginine-rich splicing factor 1 (SRSF1) from Bos taurus (Bovine).